Consider the following 223-residue polypeptide: TMF-regulated nuclear protein 1 (223 aa).

2 disordered regions span residues 1–84 and 196–223; these read MPGC…GPAG and GRLR…SPQR. A compositionally biased stretch (pro residues) spans 21 to 54; it reads GSPPPPPREPLPSLQPPSPSPTSTPTPTKSPPLP. A compositionally biased stretch (gly residues) spans 73–84; sequence ASGGSGGAGPAG.

As to quaternary structure, interacts with TMF1; may regulate TRNP1 proteasomal degradation. Ubiquitinated, leading to its degradation by the proteasome. In terms of tissue distribution, expressed in brain and kidney (at protein level). Also detected in spleen and intestine.

The protein resides in the nucleus. Functionally, DNA-binding factor that regulates the expression of a subset of genes and plays a key role in tangential, radial, and lateral expansion of the brain neocortex. Regulates neural stem cells proliferation and the production of intermediate neural progenitors and basal radial glial cells affecting the process of cerebral cortex gyrification. May control the proliferation rate of cells by regulating their progression through key cell-cycle transition points. The polypeptide is TMF-regulated nuclear protein 1 (Trnp1) (Mus musculus (Mouse)).